Consider the following 148-residue polypeptide: UPF0756 membrane protein YeaL (148 aa).

4 helical membrane passes run 14 to 34 (ALGFISHNTTVAVSILVLIIV), 51 to 71 (LTVGIIILTIGVMAPIASGTL), 86 to 106 (LVAIAVGVFVSWLGGRGITLM), and 121 to 141 (VLGVALFRGVPVGPLIAAGLV).

It belongs to the UPF0756 family.

Its subcellular location is the cell membrane. In Salmonella choleraesuis (strain SC-B67), this protein is UPF0756 membrane protein YeaL.